The primary structure comprises 426 residues: Pyruvate, phosphate dikinase regulatory protein, chloroplastic (426 aa).

The N-terminal 41 residues, Met-1 to Arg-41, are a transit peptide targeting the chloroplast. Disordered regions lie at residues Met-1–Arg-76 and Ala-94–Asp-124. Low complexity predominate over residues Ala-94–Ala-119. An ADP-binding site is contributed by His-153 to Gly-160.

It belongs to the pyruvate, phosphate/water dikinase regulatory protein family. PDRP subfamily. In terms of assembly, homodimer at pH 7.5 and homotetramer at pH 8.3. Mg(2+) is required as a cofactor. Leaf mesophyll-cells.

It is found in the plastid. The protein localises to the chloroplast stroma. It carries out the reaction N(tele)-phospho-L-histidyl/L-threonyl-[pyruvate, phosphate dikinase] + ADP = N(tele)-phospho-L-histidyl/O-phospho-L-threonyl-[pyruvate, phosphate dikinase] + AMP + H(+). The enzyme catalyses N(tele)-phospho-L-histidyl/O-phospho-L-threonyl-[pyruvate, phosphate dikinase] + phosphate + H(+) = N(tele)-phospho-L-histidyl/L-threonyl-[pyruvate, phosphate dikinase] + diphosphate. It participates in photosynthesis; C4 acid pathway. Its activity is regulated as follows. Regulated by light/dark exposure. Functionally, bifunctional serine/threonine kinase and phosphorylase involved in the dark/light-mediated regulation of PPDK by catalyzing its phosphorylation/dephosphorylation. Dark/light-induced changes in stromal concentrations of the competing ADP and Pi substrates govern the direction of the reaction. In the dark, phosphorylates the catalytic intermediate of PPDK (PPDK-HisP), inactivating it. Light exposure induces the phosphorolysis reaction that reactivates PPDK. Phosphorylates PPDK at both Ser-528 and Thr-527. Can use ADP as a high specificity substrate and GDP as a lower affinity substrate, but has no activity with UDP. The chain is Pyruvate, phosphate dikinase regulatory protein, chloroplastic (PDRP1) from Zea mays (Maize).